Here is a 5100-residue protein sequence, read N- to C-terminus: Hemicentin-2 (5100 aa).

The first 19 residues, 1–19 (MTPGAQLLPLLVAISTAVA), serve as a signal peptide directing secretion. The VWFA domain maps to 37-211 (DATLAFVFDV…QVSEVLKWVE (175 aa)). 7 N-linked (GlcNAc...) asparagine glycosylation sites follow: asparagine 330, asparagine 347, asparagine 380, asparagine 479, asparagine 526, asparagine 548, and asparagine 675. 43 Ig-like C2-type domains span residues 426–515 (PGVP…IVIT), 517–601 (PPPQ…RATT), 609–692 (PQVS…ETVT), 699–782 (PSVS…IQLV), 787–877 (PRLT…LVVT), 882–968 (PQIA…VELV), 973–1058 (PRIH…MWLS), 1063–1156 (PMIK…YVLR), 1161–1239 (PQVQ…WKLE), 1246–1335 (PHWG…AKLV), 1340–1437 (PSIR…FNLA), 1442–1531 (PSLL…FQLS), 1536–1624 (PTIW…TSLE), 1629–1717 (PTIE…YSVE), 1722–1810 (PQLL…VEVS), 1825–1913 (SAHH…KDVT), 1920–2008 (PNIE…LRVN), 2011–2100 (PRIT…VILQ), 2105–2189 (PSIL…KHFN), 2196–2285 (PAFP…QSLE), 2290–2379 (PQVT…FALS), 2384–2473 (PHLT…FSVE), 2478–2566 (PSIE…TQLS), 2571–2662 (PTIL…YHVE), 2667–2758 (PSIS…QDFN), 2781–2871 (PHEE…YELL), 2875–2964 (PPVI…KLFT), 2971–3058 (PQIS…VQLN), 3063–3153 (PSFK…FVLA), 3157–3245 (PPTF…FVVS), 3250–3340 (PQIQ…HTVN), 3345–3432 (PTIK…RNFT), 3438–3523 (PPIL…FQLT), 3528–3609 (PHIE…FRVR), 3614–3702 (PNVV…FRVE), 3707–3793 (PTIQ…LDLR), 3798–3886 (PAIA…YQVT), 3891–3977 (PTIA…MVLT), 3982–4067 (PVVK…TRLV), 4071–4158 (PPVI…VHLT), 4163–4244 (PVLT…QAVS), 4252–4336 (PVLQ…KVVT), and 4343–4428 (PVFQ…ALLA). Cysteine 449 and cysteine 497 are disulfide-bonded. 6 disulfide bridges follow: cysteine 539–cysteine 588, cysteine 630–cysteine 678, cysteine 720–cysteine 766, cysteine 808–cysteine 859, cysteine 903–cysteine 952, and cysteine 994–cysteine 1042. An omega-N-methylarginine mark is found at arginine 909, arginine 914, and arginine 915. Asparagine 1024 and asparagine 1068 each carry an N-linked (GlcNAc...) asparagine glycan. 2 disulfide bridges follow: cysteine 1091–cysteine 1140 and cysteine 1182–cysteine 1225. N-linked (GlcNAc...) asparagine glycosylation occurs at asparagine 1264. The interval 1265–1293 (ASLPCPAQGTPKPRITWRRGPSSEPLNGR) is disordered. Cysteines 1269 and 1319 form a disulfide. Asparagine 1350 carries an N-linked (GlcNAc...) asparagine glycan. 2 disulfides stabilise this stretch: cysteine 1363-cysteine 1421 and cysteine 1465-cysteine 1515. N-linked (GlcNAc...) asparagine glycosylation occurs at asparagine 1542. Cystine bridges form between cysteine 1559-cysteine 1608, cysteine 1653-cysteine 1701, cysteine 1745-cysteine 1794, and cysteine 1846-cysteine 1899. N-linked (GlcNAc...) asparagine glycosylation is found at asparagine 1676 and asparagine 1787. Asparagine 1934 is a glycosylation site (N-linked (GlcNAc...) asparagine). Cystine bridges form between cysteine 1941–cysteine 1990 and cysteine 2033–cysteine 2084. 3 N-linked (GlcNAc...) asparagine glycosylation sites follow: asparagine 2034, asparagine 2113, and asparagine 2119. Cystine bridges form between cysteine 2126-cysteine 2175 and cysteine 2218-cysteine 2269. Asparagine 2309, asparagine 2315, asparagine 2345, and asparagine 2395 each carry an N-linked (GlcNAc...) asparagine glycan. Cysteine 2314 and cysteine 2363 are disulfide-bonded. Cysteine 2408 and cysteine 2457 are joined by a disulfide. N-linked (GlcNAc...) asparagine glycosylation is found at asparagine 2469, asparagine 2502, asparagine 2541, asparagine 2606, and asparagine 2688. Cystine bridges form between cysteine 2501-cysteine 2550 and cysteine 2597-cysteine 2646. 2 cysteine pairs are disulfide-bonded: cysteine 2695–cysteine 2744 and cysteine 2806–cysteine 2855. Asparagine 2892 carries N-linked (GlcNAc...) asparagine glycosylation. Residues cysteine 2901 and cysteine 2950 are joined by a disulfide bond. Asparagine 2986 is a glycosylation site (N-linked (GlcNAc...) asparagine). Disulfide bonds link cysteine 2993/cysteine 3042, cysteine 3088/cysteine 3137, cysteine 3180/cysteine 3229, cysteine 3273/cysteine 3324, and cysteine 3369/cysteine 3418. Asparagine 3430 carries N-linked (GlcNAc...) asparagine glycosylation. Disulfide bonds link cysteine 3462–cysteine 3507, cysteine 3551–cysteine 3593, and cysteine 3637–cysteine 3686. N-linked (GlcNAc...) asparagine glycans are attached at residues asparagine 3560 and asparagine 3575. Residues asparagine 3717 and asparagine 3721 are each glycosylated (N-linked (GlcNAc...) asparagine). Cysteine 3728 and cysteine 3777 are disulfide-bonded. Asparagine 3806 carries N-linked (GlcNAc...) asparagine glycosylation. Disulfide bonds link cysteine 3819-cysteine 3870, cysteine 3912-cysteine 3961, cysteine 4003-cysteine 4051, cysteine 4093-cysteine 4142, cysteine 4184-cysteine 4231, cysteine 4274-cysteine 4322, and cysteine 4364-cysteine 4412. Residue asparagine 4304 is glycosylated (N-linked (GlcNAc...) asparagine). The Nidogen G2 beta-barrel domain maps to 4432-4654 (EPRGSRGSMT…QTEENEVGCP (223 aa)). N-linked (GlcNAc...) asparagine glycosylation is found at asparagine 4455 and asparagine 4601. One can recognise an EGF-like 1; calcium-binding domain in the interval 4668 to 4708 (DKDECSGGPSPCSHTCRNAPGHFSCSCPTGFSLAWDHRNCR). 11 disulfide bridges follow: cysteine 4672–cysteine 4683, cysteine 4679–cysteine 4692, cysteine 4694–cysteine 4707, cysteine 4713–cysteine 4726, cysteine 4720–cysteine 4735, cysteine 4739–cysteine 4752, cysteine 4758–cysteine 4771, cysteine 4765–cysteine 4780, cysteine 4801–cysteine 4812, cysteine 4808–cysteine 4821, and cysteine 4823–cysteine 4836. The EGF-like 2; calcium-binding domain occupies 4709 to 4753 (DVDECAGNTHLCQEEQRCVNLLGSYNCLASCRPGFRVTADGSNCE). Residues 4754–4789 (DVDECLEQLDECHYNQLCENTPGGHHCGCPRGYRQQ) enclose the EGF-like 3; calcium-binding domain. The EGF-like 4; calcium-binding domain maps to 4797–4837 (DINECLQLPTPCVYQCQNLQGSYRCLCPPGQTLLRDGRTCI). N-linked (GlcNAc...) asparagine glycosylation occurs at asparagine 4845. The EGF-like 5; calcium-binding domain maps to 4904 to 4943 (DLDECRVRSLCQHACQNTEGSYYCLCPSGYRLLPSGKNCQ). 3 cysteine pairs are disulfide-bonded: cysteine 4908-cysteine 4918, cysteine 4914-cysteine 4927, and cysteine 4929-cysteine 4942. The N-linked (GlcNAc...) asparagine glycan is linked to asparagine 5035.

In terms of processing, reported to be phosphorylated; however as this position is extracellular, the in vivo relevance is unsure. In terms of tissue distribution, in neonatal skin, localized in the pericellular space of basal epidermal keratinocytes (at protein level). In adult skin, restricted to basal keratinocytes of hair follicles and the interfollicular epidermis. Absent from the myotendinous junction but present in skeletal muscle (at protein level). Expressed in the pericellular extracellular matrix of epithelial cells in a number of tissues including embryonic trophectoderm and adult skin and tongue. Also present in the extracellular matrix of some, but not all, blood vessels. Expressed primarily in epithelial cells in the embryonic epidermis, lung, intestine, skeletal hindlimb muscle, tongue and the muscular layers of the esophagus.

The protein localises to the secreted. It localises to the extracellular space. Its subcellular location is the extracellular matrix. The protein resides in the cleavage furrow. This Mus musculus (Mouse) protein is Hemicentin-2 (Hmcn2).